The chain runs to 633 residues: Protein BZZ1 (633 aa).

Residues 5–271 (LSIGNEIKDS…VVKQNKPSLN (267 aa)) enclose the F-BAR domain. A coiled-coil region spans residues 138-210 (DMVNKKDNIY…INQANRTKDK (73 aa)). Residues serine 327, serine 463, serine 472, and serine 476 each carry the phosphoserine modification. Residues 429-495 (VDSKPSSGGS…KKTTQNSSDD (67 aa)) are disordered. Over residues 474–493 (NNSIRTTSTNNTKKTTQNSS) the composition is skewed to low complexity. SH3 domains lie at 493 to 555 (SDDG…ISSA) and 577 to 633 (LPVR…SYCK).

This sequence belongs to the BZZ1 family. In terms of assembly, interacts with LAS17 and MYO5.

The protein resides in the cytoplasm. It is found in the cytoskeleton. The protein localises to the actin patch. In terms of biological role, plays a role in endocytosis and trafficking to the vacuole. Functions with type I myosins to restore polarity of the actin cytoskeleton after NaCl stress. In Saccharomyces cerevisiae (strain ATCC 204508 / S288c) (Baker's yeast), this protein is Protein BZZ1 (BZZ1).